The sequence spans 103 residues: Small ribosomal subunit protein uS10 (103 aa).

It belongs to the universal ribosomal protein uS10 family. Part of the 30S ribosomal subunit.

Functionally, involved in the binding of tRNA to the ribosomes. The sequence is that of Small ribosomal subunit protein uS10 from Shewanella amazonensis (strain ATCC BAA-1098 / SB2B).